We begin with the raw amino-acid sequence, 152 residues long: MSATLDAPSPSKPRIVLGFDFGLRYIGVAVGQEVTHSANPLTTLKAHEGNPDWNQITQLIRQWNPDLLIVGLPLNMDQSEQFLTKAARRFGHRLHGRYGLAVEWVDERLSTVEARERLNIKSSASGRRQGIDQMAAQCILQTWLTEQQTIRH.

The protein belongs to the YqgF nuclease family.

The protein resides in the cytoplasm. Functionally, could be a nuclease involved in processing of the 5'-end of pre-16S rRNA. This is Putative pre-16S rRNA nuclease from Nitrosococcus oceani (strain ATCC 19707 / BCRC 17464 / JCM 30415 / NCIMB 11848 / C-107).